The sequence spans 98 residues: Lipolysis-activating peptide 1-alpha chain (98 aa).

The N-terminal stretch at 1–22 (MMKLVLFGIIVILFSMIGSIHG) is a signal peptide. One can recognise an LCN-type CS-alpha/beta domain in the interval 26–89 (PGNYPLNTYG…IWDAVKRHCK (64 aa)). Disulfide bonds link Cys-40/Cys-63, Cys-49/Cys-68, and Cys-53/Cys-70. Lys-96 is subject to Lysine amide.

It belongs to the long (3 C-C) scorpion toxin superfamily. As to quaternary structure, monomer (edited version) and heterodimer (non-edited version) of this alpha chain and a beta chain (AC B8XGZ8). Expressed by the venom gland.

Its subcellular location is the secreted. Functionally, the heterodimer non-edited LVP1 induces lipolysis in rat adipocytes. Induction of lipolysis by LVP1 appears to be mediated through the beta-2 adrenergic receptor pathway (ADRB2). In terms of biological role, the edited BmKBTx-like, similar to beta-toxins, may modulate voltage-gated sodium channels (Nav) and may block voltage-gated potassium channels (Kv). In Buthus israelis (Israeli scorpion), this protein is Lipolysis-activating peptide 1-alpha chain.